The chain runs to 211 residues: Uridine kinase (211 aa).

12-19 contacts ATP; it reads GGSGSGKT.

The protein belongs to the uridine kinase family.

It localises to the cytoplasm. The catalysed reaction is uridine + ATP = UMP + ADP + H(+). The enzyme catalyses cytidine + ATP = CMP + ADP + H(+). It participates in pyrimidine metabolism; CTP biosynthesis via salvage pathway; CTP from cytidine: step 1/3. It functions in the pathway pyrimidine metabolism; UMP biosynthesis via salvage pathway; UMP from uridine: step 1/1. The polypeptide is Uridine kinase (Bacillus licheniformis (strain ATCC 14580 / DSM 13 / JCM 2505 / CCUG 7422 / NBRC 12200 / NCIMB 9375 / NCTC 10341 / NRRL NRS-1264 / Gibson 46)).